The sequence spans 710 residues: Solute carrier organic anion transporter family member 3A1 (710 aa).

N-acetylmethionine is present on M1. Gly residues predominate over residues 1-15 (MQGKKPGGSSGGGRS). Residues 1 to 25 (MQGKKPGGSSGGGRSGELQGDEAQR) form a disordered region. Topologically, residues 1–40 (MQGKKPGGSSGGGRSGELQGDEAQRNKKKKKKVSCFSNIK) are cytoplasmic. Residues 41–60 (IFLVSECALMLAQGTVGAYL) traverse the membrane as a helical segment. Topologically, residues 61-79 (VSVLTTLERRFNLQSADVG) are extracellular. Residues 80-100 (VIASSFEIGNLALILFVSYFG) traverse the membrane as a helical segment. The Cytoplasmic segment spans residues 101–106 (ARGHRP). Residues 107-131 (RLIGCGGIVMALGALLSALPEFLTH) traverse the membrane as a helical segment. At 132-174 (QYKYEAGEIRWGAEGRDVCAANGSGGDEGPDPDLICRNRTATN) the chain is on the extracellular side. 2 N-linked (GlcNAc...) asparagine glycosylation sites follow: N153 and N169. The helical transmembrane segment at 175 to 203 (MMYLLLIGAQVLLGIGATPVQPLGVSYID) threads the bilayer. The Cytoplasmic portion of the chain corresponds to 204 to 222 (DHVRRKDSSLYIGILFTML). Residues 223–243 (VFGPACGFILGSFCTKIYVDA) form a helical membrane-spanning segment. Residues 244 to 261 (VFIDTSNLDITPDDPRWI) are Extracellular-facing. A helical membrane pass occupies residues 262–286 (GAWWGGFLLCGALLFFSSLLMFGFP). Over 287–344 (QSLPPHSEPAMESEQAMLSEREYERPKPSNGVLRHPLEPDSSASCFQQLRVIPKVTKH) the chain is Cytoplasmic. A helical membrane pass occupies residues 345–366 (LLSNPVFTCIILAACMEIAVVA). The Extracellular segment spans residues 367-386 (GFAAFLGKYLEQQFNLTTSS). Residue N381 is glycosylated (N-linked (GlcNAc...) asparagine). Residues 387 to 410 (ANQLLGMTAIPCACLGIFLGGLLV) traverse the membrane as a helical segment. The Cytoplasmic portion of the chain corresponds to 411-414 (KKLS). Residues 415-438 (LSALGAIRMAMLVNLVSTACYVSF) form a helical membrane-spanning segment. Over 439–539 (LFLGCDTGPV…PGCQEAFLTF (101 aa)) the chain is Extracellular. N-linked (GlcNAc...) asparagine glycosylation is present at N457. The Kazal-like domain maps to 465–513 (LDPYSPCNNNCECQTDSFTPVCGADGITYLSACFAGCNSTNLTGCACLT). 3 cysteine pairs are disulfide-bonded: C471–C501, C477–C497, and C486–C511. N-linked (GlcNAc...) asparagine glycans are attached at residues N502, N505, and N519. Residues 540 to 562 (LCVMCICSLIGAMAQTPSVIILI) form a helical membrane-spanning segment. The Cytoplasmic portion of the chain corresponds to 563 to 571 (RTVSPELKS). The helical transmembrane segment at 572 to 597 (YALGVLFLLLRLLGFIPPPLIFGAGI) threads the bilayer. Over 598–630 (DSTCLFWSTFCGEQGACVLYDNVVYRYLYVSIA) the chain is Extracellular. Residues 631 to 648 (IALKSFAFILYTTTWQCL) form a helical membrane-spanning segment. Over 649 to 705 (RKNYKRYIKNHEGGLSTSEFFASTLTLDNLGRDPVPANQTHRTKFIYNLEDHEWCEN) the chain is Cytoplasmic.

The protein belongs to the organo anion transporter (TC 2.A.60) family. In terms of tissue distribution, generally the expression of isoform 1 is higher than that of isoform 2. Expressed in placental trophoblasts. Expressed in pancreas, kidney, liver, lung, brain, heart, cerebellum, peripheral blood leukocyte, colon, small intestine, ovary, testis, prostate, thyroid, thymus and spleen. Expressed in fetal brain, heart, kidney, liver, lung, skeletal muscle, spleen and pancreas. In testis, detected in spermatogonia at different stages and absent from Sertoli cells. Expressed in the choroid plexus epithelium, at the basolateral membrane. In brain, also very abundant in the gray matter of the frontal cortex, but not associated with neuronal cell bodies. Not detected in the white matter. As to expression, expressed in heart, brain, cerebellum, testis, lung, thyroid, spoleen and liver. In testis, primarily localized to the basal membrane of Sertoli cells and weakly expressed within the tubules. In testis, also present in spermatogonia at different stages. In brain, expressed in the choroid plexus epithelium, at the apical membrane as well as in the subapical intracellular vesicular compartments. In brain, also associated with neuronal bodies and axons in both the gray and the white matters of the frontal cortex.

The protein localises to the basolateral cell membrane. Its subcellular location is the apical cell membrane. It is found in the basal cell membrane. It carries out the reaction L-thyroxine(out) = L-thyroxine(in). The enzyme catalyses prostaglandin E1(out) = prostaglandin E1(in). The catalysed reaction is prostaglandin E2(out) = prostaglandin E2(in). It catalyses the reaction prostaglandin F2alpha(out) = prostaglandin F2alpha(in). It carries out the reaction (5Z,8Z,11Z,14Z)-eicosatetraenoate(out) = (5Z,8Z,11Z,14Z)-eicosatetraenoate(in). The enzyme catalyses taurocholate(out) = taurocholate(in). The catalysed reaction is glycocholate(out) = glycocholate(in). It catalyses the reaction estrone 3-sulfate(out) = estrone 3-sulfate(in). It carries out the reaction argipressin(out) = argipressin(in). Its activity is regulated as follows. Stimulated by extracellular acidic pH. Functionally, putative organic anion antiporter with apparent broad substrate specificity. Recognizes various substrates including thyroid hormone L-thyroxine, prostanoids such as prostaglandin E1 and E2, bile acids such as taurocholate, glycolate and glycochenodeoxycholate and peptide hormones such as L-arginine vasopressin, likely operating in a tissue-specific manner. The transport mechanism, its electrogenicity and potential tissue-specific counterions remain to be elucidated. This chain is Solute carrier organic anion transporter family member 3A1 (SLCO3A1), found in Homo sapiens (Human).